We begin with the raw amino-acid sequence, 416 residues long: Gasdermin-B (416 aa).

The segment at 1 to 280 (MFSVFEEITR…EKRKDVLNSL (280 aa)) is triggers pyroptosis. 2 beta stranded membrane-spanning segments follow: residues 83 to 101 (EFQI…VRLP) and 102 to 125 (KEIT…ENRI). (Microbial infection) Glycyl lysine isopeptide (Lys-Gly) (interchain with G-Cter in ubiquitin) cross-links involve residues Lys-166, Lys-177, Lys-190, and Lys-192. The next 2 membrane-spanning stretches (beta stranded) occupy residues 167-183 (EETL…SQIS) and 184-198 (QGHL…REVT). Residues 229 to 250 (KSFPEEKDGASSCLGKSLGSED) are disordered. Positions 248–276 (SEDSRNMKEKLEDMESVLKDLTEEKRKDV) form a coiled coil. Met-308 participates in a covalent cross-link: (Microbial infection) Glycyl lysine isopeptide (Lys-Gly) (interchain with G-Cter in ubiquitin).

It belongs to the gasdermin family. Homooligomer; homooligomeric ring-shaped pore complex containing 24-26 subunits when inserted in the membrane. Post-translationally, cleavage by granzyme A (GZMA) relieves autoinhibition by releasing the N-terminal moiety (Gasdermin-B, N-terminal) that initiates pyroptosis. Not cleaved by other granzymes. Major cleavage site takes places after Lys-244; a minor cleavage site takes place after Lys-229. Cleavage by neutrophil elastase ELANE, inhibits its ability to trigger pyroptosis. In terms of processing, palmitoylated. (Microbial infection) Ubiquitinated by S.flexneri IpaH7.8, leading to its degradation by the proteasome, thereby preventing its ability to form pores in bacterial-derived membranes. In the gastrointestinal tract, expressed in proliferating cells, including in the basal cell layer of esophagus and in isthmus/neck of stomach.

It is found in the cytoplasm. The protein localises to the cell membrane. The full-length protein before cleavage is inactive: intramolecular interactions between N- and C-terminal domains mediate autoinhibition in the absence of activation signal. The intrinsic pyroptosis-inducing activity is carried by the released N-terminal moiety (Gasdermin-B, N-terminal) following cleavage by granzyme A (GZMA). Functionally, precursor of a pore-forming protein that acts as a downstream mediator of granzyme-mediated cell death. This form constitutes the precursor of the pore-forming protein: upon cleavage, the released N-terminal moiety (Gasdermin-B, N-terminal) binds to membranes and forms pores, triggering pyroptosis. Also acts as a regulator of epithelial cell repair independently of programmed cell death: translocates to the plasma membrane and promotes epithelial maintenance and repair by regulating PTK2/FAK-mediated phosphorylation of PDGFA. Pore-forming protein produced by cleavage by granzyme A (GZMA), which causes membrane permeabilization and pyroptosis in target cells of cytotoxic T and natural killer (NK) cells. Key downstream mediator of granzyme-mediated cell death: (1) granzyme A (GZMA), delivered to target cells from cytotoxic T- and NK-cells, (2) specifically cleaves Gasdermin-B to generate this form. After cleavage, moves to the plasma membrane, homooligomerizes within the membrane and forms pores of 10-15 nanometers (nm) of inner diameter, triggering pyroptosis. The different isoforms recognize and bind different phospholipids on membranes, promoting cell death of different target cells. In terms of biological role, precursor of a pore-forming protein that acts as a downstream mediator of granzyme-mediated cell death and mediates pyroptosis. Following cleavage and activation by granzyme A (GZMA), the N-terminal part binds to membrane inner leaflet lipids, homooligomerizes within the human plasma membrane and forms pores of 10-15 nanometers (nm) of inner diameter, triggering pyroptosis. Recognizes and binds membrane inner leaflet lipids of human cells, such as phosphatidylinositol 4-phosphate, phosphatidylinositol 5-phosphate, bisphosphorylated phosphatidylinositols, such as phosphatidylinositol (4,5)-bisphosphate, and more weakly to phosphatidic acid. Also binds sufatide, a component of the apical membrane of epithelial cells. Its function is as follows. Precursor of a pore-forming protein that acts as a downstream mediator of granzyme-mediated cell death and mediates pyroptosis of human cells. Following cleavage and activation by granzyme A (GZMA), the N-terminal part binds to membrane inner leaflet lipids, homooligomerizes within the human plasma membrane and forms pores of 10-15 nanometers (nm) of inner diameter, triggering pyroptosis. Functionally, precursor of a pore-forming protein that acts as a downstream mediator of granzyme-mediated cell death and specifically mediates cell death of Gram-negative bacteria in response to infection. Following cleavage and activation by granzyme A (GZMA), the N-terminal part recognizes and binds phospholipids found on Gram-negative bacterial membranes, such as lipid A and cariolipin, homooligomerizes within the bacterial membranes and forms pores, triggering pyroptosis followed by cell death. In contrast to isoform 4, does not bind to membrane inner leaflet lipids of host human cell, such as phosphatidylinositol 4-phosphate, phosphatidylinositol 5-phosphate, bisphosphorylated phosphatidylinositols, such as phosphatidylinositol (4,5)-bisphosphate. Not able to trigger pyroptosis. The polypeptide is Gasdermin-B (Homo sapiens (Human)).